A 210-amino-acid polypeptide reads, in one-letter code: Small ribosomal subunit protein uS3 (210 aa).

Positions 38–106 (LRSFLKKRLY…EVYLNIQEVR (69 aa)) constitute a KH type-2 domain.

It belongs to the universal ribosomal protein uS3 family. Part of the 30S ribosomal subunit. Forms a tight complex with proteins S10 and S14.

Binds the lower part of the 30S subunit head. Binds mRNA in the 70S ribosome, positioning it for translation. This chain is Small ribosomal subunit protein uS3, found in Geotalea uraniireducens (strain Rf4) (Geobacter uraniireducens).